Consider the following 841-residue polypeptide: Auxin response factor 24 (841 aa).

The disordered stretch occupies residues 109 to 140 (LPEKQQDGNGSGNGNVSKDKVEEEEVVPPAAT). The TF-B3 DNA-binding region spans 148-250 (FCKTLTASDT…ELRVGVRRAM (103 aa)). 3 disordered regions span residues 366–397 (PRPD…KRAR), 663–715 (QDAL…SRSC), and 804–841 (GALN…SENC). Positions 684–695 (AQHDSAREKHQS) are enriched in basic and acidic residues. Composition is skewed to polar residues over residues 701-713 (KNIQ…GSSR) and 830-841 (GLSTPSLNSENC). Positions 713 to 797 (RSCKKVHKQG…HKIFIYTREE (85 aa)) constitute a PB1 domain.

The protein belongs to the ARF family. In terms of assembly, homodimers and heterodimers. Expressed in roots, culms, leaves and young panicles.

The protein localises to the nucleus. Its function is as follows. Auxin response factors (ARFs) are transcriptional factors that bind specifically to the DNA sequence 5'-TGTCTC-3' found in the auxin-responsive promoter elements (AuxREs). The protein is Auxin response factor 24 (ARF24) of Oryza sativa subsp. japonica (Rice).